A 380-amino-acid polypeptide reads, in one-letter code: Queuine tRNA-ribosyltransferase (380 aa).

Asp96 (proton acceptor) is an active-site residue. Substrate contacts are provided by residues 96-100 (DSGGF), Asp150, Gln193, and Gly220. The interval 251–257 (GVGAPDS) is RNA binding. Asp270 serves as the catalytic Nucleophile. An RNA binding; important for wobble base 34 recognition region spans residues 275–279 (TRIAR). Zn(2+) is bound by residues Cys308, Cys310, Cys313, and His339.

This sequence belongs to the queuine tRNA-ribosyltransferase family. As to quaternary structure, homodimer. Within each dimer, one monomer is responsible for RNA recognition and catalysis, while the other monomer binds to the replacement base PreQ1. The cofactor is Zn(2+).

It carries out the reaction 7-aminomethyl-7-carbaguanine + guanosine(34) in tRNA = 7-aminomethyl-7-carbaguanosine(34) in tRNA + guanine. It functions in the pathway tRNA modification; tRNA-queuosine biosynthesis. Functionally, catalyzes the base-exchange of a guanine (G) residue with the queuine precursor 7-aminomethyl-7-deazaguanine (PreQ1) at position 34 (anticodon wobble position) in tRNAs with GU(N) anticodons (tRNA-Asp, -Asn, -His and -Tyr). Catalysis occurs through a double-displacement mechanism. The nucleophile active site attacks the C1' of nucleotide 34 to detach the guanine base from the RNA, forming a covalent enzyme-RNA intermediate. The proton acceptor active site deprotonates the incoming PreQ1, allowing a nucleophilic attack on the C1' of the ribose to form the product. After dissociation, two additional enzymatic reactions on the tRNA convert PreQ1 to queuine (Q), resulting in the hypermodified nucleoside queuosine (7-(((4,5-cis-dihydroxy-2-cyclopenten-1-yl)amino)methyl)-7-deazaguanosine). The chain is Queuine tRNA-ribosyltransferase from Streptococcus pyogenes serotype M3 (strain ATCC BAA-595 / MGAS315).